A 61-amino-acid chain; its full sequence is Sperm protamine P1 (61 aa).

The interval 1–61 (MARFRRSRSR…RSSRRSRRRN (61 aa)) is disordered.

The protein belongs to the protamine P1 family. Testis.

The protein localises to the nucleus. Its subcellular location is the chromosome. Its function is as follows. Protamines substitute for histones in the chromatin of sperm during the haploid phase of spermatogenesis. They compact sperm DNA into a highly condensed, stable and inactive complex. The sequence is that of Sperm protamine P1 (PRM1) from Ornithorhynchus anatinus (Duckbill platypus).